Reading from the N-terminus, the 123-residue chain is Cell division protein SepF (123 aa).

This sequence belongs to the SepF family. In terms of assembly, homodimer. Interacts with FtsZ.

The protein resides in the cytoplasm. In terms of biological role, cell division protein that is part of the divisome complex and is recruited early to the Z-ring. Probably stimulates Z-ring formation, perhaps through the cross-linking of FtsZ protofilaments. Its function overlaps with FtsA. This chain is Cell division protein SepF, found in Tropheryma whipplei (strain TW08/27) (Whipple's bacillus).